We begin with the raw amino-acid sequence, 346 residues long: MIKISIDAMGGDFGPEVVIPGAAKAFERHPDIRFIFFGLPAQVEPVLARYPKLKEASEFRASEVAIGMDDKPSQALRAGRGKSSMWQAIEAVKTGDADACVSAGNTGALMAMSKFCLRMMSDVERPAIAGIWPTLRGESIVLDIGATIGADARQLVDYAVMGAGMARALFEVRKPTVGLLNVGTEEVKGLDEIKEAGQILRDTPLDGLEYSGFVEGNDIGKGTVDVVVTEGFTGNIALKTAEGTARQMAELLRQAMSRTLLAKIGYVFAKGAFDRLREKMDPNKVNGGVFLGLSGIVIKSHGGANAEGFCSAVEVGYDMVRNRLLEKIEADLAHFHHSHSHVSSKA.

It belongs to the PlsX family. As to quaternary structure, homodimer. Probably interacts with PlsY.

It localises to the cytoplasm. It carries out the reaction a fatty acyl-[ACP] + phosphate = an acyl phosphate + holo-[ACP]. The protein operates within lipid metabolism; phospholipid metabolism. Functionally, catalyzes the reversible formation of acyl-phosphate (acyl-PO(4)) from acyl-[acyl-carrier-protein] (acyl-ACP). This enzyme utilizes acyl-ACP as fatty acyl donor, but not acyl-CoA. The polypeptide is Phosphate acyltransferase (Brucella abortus (strain S19)).